A 200-amino-acid chain; its full sequence is Large ribosomal subunit protein bL25 (200 aa).

Positions 1-20 (MEARELKANVRKESGKEQAR) are disordered.

The protein belongs to the bacterial ribosomal protein bL25 family. CTC subfamily. Part of the 50S ribosomal subunit; part of the 5S rRNA/L5/L18/L25 subcomplex. Contacts the 5S rRNA. Binds to the 5S rRNA independently of L5 and L18.

In terms of biological role, this is one of the proteins that binds to the 5S RNA in the ribosome where it forms part of the central protuberance. In Syntrophus aciditrophicus (strain SB), this protein is Large ribosomal subunit protein bL25.